The following is a 357-amino-acid chain: Alanine racemase (357 aa).

The active-site Proton acceptor; specific for D-alanine is the K34. K34 bears the N6-(pyridoxal phosphate)lysine mark. R129 contributes to the substrate binding site. The active-site Proton acceptor; specific for L-alanine is the Y254. M302 contributes to the substrate binding site.

It belongs to the alanine racemase family. Pyridoxal 5'-phosphate is required as a cofactor.

It carries out the reaction L-alanine = D-alanine. It participates in amino-acid biosynthesis; D-alanine biosynthesis; D-alanine from L-alanine: step 1/1. Functionally, catalyzes the interconversion of L-alanine and D-alanine. Likely plays an important role in supplying D-alanine, which is an indispensable constituent in the biosynthesis of bacterial cell-wall peptidoglycan. The chain is Alanine racemase from Aeromonas hydrophila subsp. hydrophila (strain ATCC 7966 / DSM 30187 / BCRC 13018 / CCUG 14551 / JCM 1027 / KCTC 2358 / NCIMB 9240 / NCTC 8049).